The sequence spans 871 residues: Tegument protein UL47 homolog (871 aa).

The disordered stretch occupies residues 1–212; the sequence is MDQHHGARGG…DEDDMEVIRD (212 aa). A Nuclear localization signal motif is present at residues 13–33; the sequence is IRRPRRSIESRSHPFRATGNT. Polar residues-rich tracts occupy residues 30 to 41 and 59 to 81; these read TGNTQRTYSTPR and EQASNQDESSNPSTSNAQQSTSF. Composition is skewed to acidic residues over residues 114 to 134, 146 to 155, and 185 to 207; these read SSSEEEEEEGPAQAPLDEEDQ, SSDENDEEED, and SESETDIDAEEEEEDDEDDEDDM.

This sequence belongs to the alphaherpesvirinae HHV-1 UL47 family. As to quaternary structure, interacts with US3 kinase. Interacts with UL31 and UL34; these interactions seem important for efficient virion nuclear egress. Interacts with UL41/VHS. In terms of processing, phosphorylated by US3. This phosphorylation is required for proper nuclear localization.

It is found in the virion tegument. Its subcellular location is the host nucleus. The protein localises to the host cytoplasm. Its function is as follows. Tegument protein that can bind to various RNA transcripts. Plays a role in the attenuation of selective viral and cellular mRNA degradation by modulating the activity of host shutoff RNase UL41/VHS. Also plays a role in the primary envelopment of virions in the perinuclear space, probably by interacting with two nuclear egress proteins UL31 and UL34. In Equus caballus (Horse), this protein is Tegument protein UL47 homolog.